The sequence spans 297 residues: Lymphocyte antigen 6 complex locus protein G6f (297 aa).

The N-terminal stretch at 1–16 (MAVLFLLLFLCGTPQA) is a signal peptide. An Ig-like V-type domain is found at 17–122 (ADNMQAIYVA…HNYQNWRVYD (106 aa)). Residues 17–235 (ADNMQAIYVA…APSTGWDMPW (219 aa)) are Extracellular-facing. Cysteines 35 and 106 form a disulfide. The N-linked (GlcNAc...) asparagine glycan is linked to Asn88. A helical membrane pass occupies residues 236 to 256 (ILMLLLTMGQGVVILALSIVL). At 257 to 297 (WRQRVRGAPGRDASIPQFKPEIQVYENIHLARLGPPAHKPR) the chain is on the cytoplasmic side. The residue at position 281 (Tyr281) is a Phosphotyrosine.

Homodimer; disulfide-linked. Interacts with GRB2 and GRB7 in a phosphorylation-dependent manner. N-glycosylated.

The protein resides in the cell membrane. Functionally, may play a role in the downstream signal transduction pathways involving GRB2 and GRB7. The sequence is that of Lymphocyte antigen 6 complex locus protein G6f (LY6G6F) from Homo sapiens (Human).